We begin with the raw amino-acid sequence, 87 residues long: UPF0250 protein SG0794 (87 aa).

Belongs to the UPF0250 family.

The chain is UPF0250 protein SG0794 from Sodalis glossinidius (strain morsitans).